The sequence spans 656 residues: uncharacterized protein (656 aa).

Residues 623–656 form a disordered region; it reads EIDIPGTPASIDPEWSRPPGSITDDHVFDAPLHR. A compositionally biased stretch (basic and acidic residues) spans 645 to 656; the sequence is TDDHVFDAPLHR.

This is an uncharacterized protein from Mycobacterium tuberculosis (strain ATCC 25618 / H37Rv).